The sequence spans 113 residues: Iron-sulfur cluster insertion protein ErpA (113 aa).

The iron-sulfur cluster site is built by Cys41, Cys105, and Cys107.

Belongs to the HesB/IscA family. As to quaternary structure, homodimer. It depends on iron-sulfur cluster as a cofactor.

Required for insertion of 4Fe-4S clusters for at least IspG. The protein is Iron-sulfur cluster insertion protein ErpA of Colwellia psychrerythraea (strain 34H / ATCC BAA-681) (Vibrio psychroerythus).